A 281-amino-acid polypeptide reads, in one-letter code: 2,3,4,5-tetrahydropyridine-2,6-dicarboxylate N-succinyltransferase (281 aa).

Belongs to the transferase hexapeptide repeat family.

The protein localises to the cytoplasm. The enzyme catalyses (S)-2,3,4,5-tetrahydrodipicolinate + succinyl-CoA + H2O = (S)-2-succinylamino-6-oxoheptanedioate + CoA. Its pathway is amino-acid biosynthesis; L-lysine biosynthesis via DAP pathway; LL-2,6-diaminopimelate from (S)-tetrahydrodipicolinate (succinylase route): step 1/3. The polypeptide is 2,3,4,5-tetrahydropyridine-2,6-dicarboxylate N-succinyltransferase (Afipia carboxidovorans (strain ATCC 49405 / DSM 1227 / KCTC 32145 / OM5) (Oligotropha carboxidovorans)).